A 212-amino-acid polypeptide reads, in one-letter code: Peptide methionine sulfoxide reductase MsrA (212 aa).

Residue Cys-52 is part of the active site.

It belongs to the MsrA Met sulfoxide reductase family.

The enzyme catalyses L-methionyl-[protein] + [thioredoxin]-disulfide + H2O = L-methionyl-(S)-S-oxide-[protein] + [thioredoxin]-dithiol. It carries out the reaction [thioredoxin]-disulfide + L-methionine + H2O = L-methionine (S)-S-oxide + [thioredoxin]-dithiol. Functionally, has an important function as a repair enzyme for proteins that have been inactivated by oxidation. Catalyzes the reversible oxidation-reduction of methionine sulfoxide in proteins to methionine. The protein is Peptide methionine sulfoxide reductase MsrA of Escherichia coli O17:K52:H18 (strain UMN026 / ExPEC).